The chain runs to 580 residues: Amino-acid acetyltransferase, mitochondrial (580 aa).

One can recognise an N-acetyltransferase domain in the interval 403–560 (LTMQNLFDDK…NPRHKNGVVN (158 aa)).

This sequence belongs to the acetyltransferase family.

The protein resides in the mitochondrion. It catalyses the reaction L-glutamate + acetyl-CoA = N-acetyl-L-glutamate + CoA + H(+). It functions in the pathway amino-acid biosynthesis; L-arginine biosynthesis; N(2)-acetyl-L-ornithine from L-glutamate: step 1/4. N-acetylglutamate synthase involved in arginine biosynthesis. The chain is Amino-acid acetyltransferase, mitochondrial (ARG2) from Candida dubliniensis (strain CD36 / ATCC MYA-646 / CBS 7987 / NCPF 3949 / NRRL Y-17841) (Yeast).